Here is a 78-residue protein sequence, read N- to C-terminus: Nucleocapsid VP1 (78 aa).

In terms of assembly, homodimer.

It is found in the virion. Functionally, completely wraps the viral circular dsDNA genome to form a nucleoprotein filament. These interactions between the viral genome and the nucleocapsid proteins probably maintain the DNA in A-form. This certainly protects the viral DNA under conditions such as the extreme desiccation of its host. This is Nucleocapsid VP1 from Sulfolobus (SPV1).